A 410-amino-acid polypeptide reads, in one-letter code: Magnesium transporter NIPA3 (410 aa).

Over 1-67 (MGAQVRLPPG…ISANVENKYS (67 aa)) the chain is Extracellular. Residues N25, N35, and N50 are each glycosylated (N-linked (GlcNAc...) asparagine). Residues 68–88 (LYVGLVLAVSSSIFIGSSFIL) form a helical membrane-spanning segment. The Cytoplasmic segment spans residues 89–114 (KKKGLLQLASKGITRAGQGGHSYLKE). The helical transmembrane segment at 115–135 (WLWWVGLLSMGVGEAANFAAY) threads the bilayer. Position 136 (A136) is a topological domain, extracellular. Residues 137-157 (FAPATLVTPLGALSVLISAIL) form a helical membrane-spanning segment. Residues 158 to 165 (SSYFLNEH) are Cytoplasmic-facing. Residues 166 to 186 (LNIHGKIGCILSILGSTVMVI) form a helical membrane-spanning segment. Over 187 to 207 (HAPQEEEVTSLHEMEMKLRDP) the chain is Extracellular. A helical membrane pass occupies residues 208–228 (GFISFAVIVTVISLVLILIVA). The Cytoplasmic portion of the chain corresponds to 229–233 (PKKGQ). A helical transmembrane segment spans residues 234 to 254 (TNILVYISICSLIGAFSVSSV). Residues 255–273 (KGLGIAIKELIEWKPVYKH) lie on the Extracellular side of the membrane. Residues 274 to 294 (PLVFVLLAVLVLSVTTQINYL) form a helical membrane-spanning segment. Residues 295-304 (NKALDTFNTS) lie on the Cytoplasmic side of the membrane. The chain crosses the membrane as a helical span at residues 305 to 325 (IVTPIYYVFFTSMVVTCSAIL). The Extracellular portion of the chain corresponds to 326-336 (FQEWYGMTAGD). A helical membrane pass occupies residues 337–357 (IIGTLSGFFTIIIGIFLLHAF). Residues 358–410 (KNTDITWSELTSTAKKEAVSLNVSENNYVLLENLECSAPGYNDDVTLFSRTDD) are Cytoplasmic-facing.

It belongs to the NIPA family.

It is found in the golgi apparatus membrane. The enzyme catalyses Mg(2+)(in) = Mg(2+)(out). Its function is as follows. Acts as a Mg(2+) transporter. Can also transport other divalent cations such as Fe(2+), Sr(2+), Ba(2+), Mn(2+), Cu(2+) and Co(2+) but to a much less extent than Mg(2+). The protein is Magnesium transporter NIPA3 (NIPAL1) of Pongo abelii (Sumatran orangutan).